Reading from the N-terminus, the 87-residue chain is Small ribosomal subunit protein bS20 (87 aa).

The tract at residues 1–26 is disordered; it reads MANIKSAKKRAVQSEKARKHNASRRS.

This sequence belongs to the bacterial ribosomal protein bS20 family.

Functionally, binds directly to 16S ribosomal RNA. The protein is Small ribosomal subunit protein bS20 of Salmonella gallinarum (strain 287/91 / NCTC 13346).